Reading from the N-terminus, the 342-residue chain is Dihydroorotase (342 aa).

Residues His-13 and His-15 each coordinate Zn(2+). Substrate-binding positions include 15-17 (HLR) and Asn-41. Zn(2+) contacts are provided by Lys-97, His-134, and His-172. Lys-97 is modified (N6-carboxylysine). His-134 is a substrate binding site. Leu-217 is a substrate binding site. Zn(2+) is bound at residue Asp-245. Residue Asp-245 is part of the active site. His-249 and Ala-261 together coordinate substrate.

It belongs to the metallo-dependent hydrolases superfamily. DHOase family. Class II DHOase subfamily. As to quaternary structure, homodimer. It depends on Zn(2+) as a cofactor.

The catalysed reaction is (S)-dihydroorotate + H2O = N-carbamoyl-L-aspartate + H(+). It functions in the pathway pyrimidine metabolism; UMP biosynthesis via de novo pathway; (S)-dihydroorotate from bicarbonate: step 3/3. In terms of biological role, catalyzes the reversible cyclization of carbamoyl aspartate to dihydroorotate. The chain is Dihydroorotase from Shewanella loihica (strain ATCC BAA-1088 / PV-4).